The following is a 418-amino-acid chain: Enolase (418 aa).

A (2R)-2-phosphoglycerate-binding site is contributed by Gln162. The active-site Proton donor is the Glu204. Mg(2+) contacts are provided by Asp241, Glu283, and Asp309. The (2R)-2-phosphoglycerate site is built by Lys334, Arg363, Ser364, and Lys385. The active-site Proton acceptor is the Lys334.

This sequence belongs to the enolase family. Mg(2+) serves as cofactor.

The protein resides in the cytoplasm. It localises to the secreted. Its subcellular location is the cell surface. It catalyses the reaction (2R)-2-phosphoglycerate = phosphoenolpyruvate + H2O. It functions in the pathway carbohydrate degradation; glycolysis; pyruvate from D-glyceraldehyde 3-phosphate: step 4/5. Its function is as follows. Catalyzes the reversible conversion of 2-phosphoglycerate (2-PG) into phosphoenolpyruvate (PEP). It is essential for the degradation of carbohydrates via glycolysis. This Pelagibacter ubique (strain HTCC1062) protein is Enolase.